Consider the following 368-residue polypeptide: ATP-dependent (S)-NAD(P)H-hydrate dehydratase (368 aa).

The region spanning 3–359 (SPSKKLLANV…DEVHGSFLDL (357 aa)) is the YjeF C-terminal domain. Residues Gly-120 and 173–179 (NVVEFAR) contribute to the (6S)-NADPHX site. Residues 217–221 (KGPHD) and 236–245 (GGLKRSGGQG) each bind ATP. (6S)-NADPHX is bound at residue Asp-246.

Belongs to the NnrD/CARKD family. It depends on Mg(2+) as a cofactor.

The protein localises to the cytoplasm. The enzyme catalyses (6S)-NADHX + ATP = ADP + phosphate + NADH + H(+). It catalyses the reaction (6S)-NADPHX + ATP = ADP + phosphate + NADPH + H(+). In terms of biological role, catalyzes the dehydration of the S-form of NAD(P)HX at the expense of ATP, which is converted to ADP. Together with NAD(P)HX epimerase, which catalyzes the epimerization of the S- and R-forms, the enzyme allows the repair of both epimers of NAD(P)HX, a damaged form of NAD(P)H that is a result of enzymatic or heat-dependent hydration. This chain is ATP-dependent (S)-NAD(P)H-hydrate dehydratase, found in Ajellomyces capsulatus (strain G186AR / H82 / ATCC MYA-2454 / RMSCC 2432) (Darling's disease fungus).